The sequence spans 148 residues: Large ribosomal subunit protein bL9 (148 aa).

This sequence belongs to the bacterial ribosomal protein bL9 family.

Binds to the 23S rRNA. In Bacillus cereus (strain G9842), this protein is Large ribosomal subunit protein bL9.